The sequence spans 110 residues: UPF0122 protein Aflv_1766 (110 aa).

This sequence belongs to the UPF0122 family.

In terms of biological role, might take part in the signal recognition particle (SRP) pathway. This is inferred from the conservation of its genetic proximity to ftsY/ffh. May be a regulatory protein. The chain is UPF0122 protein Aflv_1766 from Anoxybacillus flavithermus (strain DSM 21510 / WK1).